The following is a 528-amino-acid chain: MSAPKSGGDPLPHPPKEQLPDISYCITSPPPWPEAVLLGFQHYLVMLGTTVLIPSALVPQMGGRNEEKAKLIQTILFVAGLNTLLQTVFGTRLPAVIGASYTFVPVTISIMLSGRFNDVADPVERFKRIIRATQGALIVASTLQIILGFSGLWRNVVRFLSPLSAAPLVGLVGYGLYELGFPGVAKCIEIGLPGLIILILISQYMPHVIKGGKHVFARFAVIFSVAIVWLYAFFLTLGGAYNGVGTDTQRSCRTDRAGLISAAPWIRVPWPFQWGAPLFDAGEAFAMMMASFVALVESTGAFIAVSRYASATMPPPSVISRGVGWQGVAILISGLFGTGIGSSVSVENAGLLALTKIGSRRVVQISAGFMIFFSILGKFGAVFASIPSPIIAALYCLFFAYVGAGGLSLLQFCNLNSFRTLFILGFSIFLGLSIPQYFNEHTAIKGYGPVHTGARWFNDMVNVPFSSKAFVGGCVAYLLDTTLHKKDGSIRKDRGKHWWDRFWTFKNDPRTEEFYALPFNLNKYFPSV.

Residues 1–20 (MSAPKSGGDPLPHPPKEQLP) form a disordered region. 12 helical membrane-spanning segments follow: residues 35–55 (AVLLGFQHYLVMLGTTVLIPS), 71–91 (LIQTILFVAGLNTLLQTVFGT), 93–113 (LPAVIGASYTFVPVTISIMLS), 133–153 (TQGALIVASTLQIILGFSGLW), 159–179 (FLSPLSAAPLVGLVGYGLYEL), 181–201 (FPGVAKCIEIGLPGLIILILI), 219–239 (FAVIFSVAIVWLYAFFLTLGG), 285–305 (FAMMMASFVALVESTGAFIAV), 367–387 (AGFMIFFSILGKFGAVFASIP), 390–410 (IIAALYCLFFAYVGAGGLSLL), 418–438 (FRTLFILGFSIFLGLSIPQYF), and 460–479 (MVNVPFSSKAFVGGCVAYLL).

This sequence belongs to the nucleobase:cation symporter-2 (NCS2) (TC 2.A.40) family. In terms of tissue distribution, weakly expressed in the vasculature of developing leaves.

It localises to the membrane. This is Nucleobase-ascorbate transporter 5 (NAT5) from Arabidopsis thaliana (Mouse-ear cress).